The primary structure comprises 191 residues: Small ribosomal subunit protein uS5 (191 aa).

The segment at 1-21 (MAAERERGGRERSREREERDS) is disordered. The region spanning 23-86 (FVDKLVHINR…ESAKRNLTRV (64 aa)) is the S5 DRBM domain.

As to quaternary structure, part of the 30S ribosomal subunit. Contacts proteins S4 and S8.

Functionally, with S4 and S12 plays an important role in translational accuracy. Its function is as follows. Located at the back of the 30S subunit body where it stabilizes the conformation of the head with respect to the body. In Rhodopseudomonas palustris (strain ATCC BAA-98 / CGA009), this protein is Small ribosomal subunit protein uS5.